The primary structure comprises 68 residues: Large ribosomal subunit protein uL29 (68 aa).

Belongs to the universal ribosomal protein uL29 family.

The protein is Large ribosomal subunit protein uL29 of Streptococcus thermophilus (strain ATCC BAA-250 / LMG 18311).